The primary structure comprises 348 residues: Putative agmatine deiminase (348 aa).

Cys-335 functions as the Amidino-cysteine intermediate in the catalytic mechanism.

Belongs to the agmatine deiminase family.

The catalysed reaction is agmatine + H2O = N-carbamoylputrescine + NH4(+). This Legionella pneumophila subsp. pneumophila (strain Philadelphia 1 / ATCC 33152 / DSM 7513) protein is Putative agmatine deiminase.